Reading from the N-terminus, the 235-residue chain is RNA polymerase sigma factor SigI7 (235 aa).

A Polymerase core binding motif is present at residues 49-62; that stretch reads DELSIALMAFVETI. Positions 191–210 form a DNA-binding region, H-T-H motif; sequence VAEIEQSLKIPRKTIERARK.

This sequence belongs to the sigma-70 factor family. SigI subfamily. Interacts with RsgI7.

The protein resides in the cytoplasm. With respect to regulation, negatively regulated by the anti-sigma-I factor RsgI7. Sigma factors are initiation factors that promote the attachment of RNA polymerase to specific initiation sites and are then released. The sequence is that of RNA polymerase sigma factor SigI7 from Acetivibrio thermocellus (strain ATCC 27405 / DSM 1237 / JCM 9322 / NBRC 103400 / NCIMB 10682 / NRRL B-4536 / VPI 7372) (Clostridium thermocellum).